The primary structure comprises 205 residues: Proteasome subunit beta type-3 (205 aa).

The protein belongs to the peptidase T1B family. In terms of assembly, the 26S proteasome consists of a 20S proteasome core and two 19S regulatory subunits. The 20S proteasome core is composed of 28 subunits that are arranged in four stacked rings, resulting in a barrel-shaped structure. The two end rings are each formed by seven alpha subunits, and the two central rings are each formed by seven beta subunits. The catalytic chamber with the active sites is on the inside of the barrel.

The protein localises to the cytoplasm. It localises to the nucleus. In terms of biological role, non-catalytic component of the proteasome, a multicatalytic proteinase complex which is characterized by its ability to cleave peptides with Arg, Phe, Tyr, Leu, and Glu adjacent to the leaving group at neutral or slightly basic pH. The proteasome has an ATP-dependent proteolytic activity. The polypeptide is Proteasome subunit beta type-3 (Drosophila melanogaster (Fruit fly)).